Here is a 286-residue protein sequence, read N- to C-terminus: Foldase protein PrsA 1 (286 aa).

Positions 1-18 are cleaved as a signal peptide; the sequence is MKKAMLALAATSVIALSA. C19 is lipidated: N-palmitoyl cysteine. C19 carries the S-diacylglycerol cysteine lipid modification. The 91-residue stretch at 130–220 folds into the PpiC domain; that stretch reads KPEIKASHIL…FGYHIIKVTD (91 aa).

The protein belongs to the PrsA family.

The protein localises to the cell membrane. The enzyme catalyses [protein]-peptidylproline (omega=180) = [protein]-peptidylproline (omega=0). Plays a major role in protein secretion by helping the post-translocational extracellular folding of several secreted proteins. This chain is Foldase protein PrsA 1 (prsA1), found in Bacillus cereus (strain ATCC 14579 / DSM 31 / CCUG 7414 / JCM 2152 / NBRC 15305 / NCIMB 9373 / NCTC 2599 / NRRL B-3711).